The primary structure comprises 128 residues: Nitrogen fixation nifHD region GlnB-like protein 2 (128 aa).

This sequence belongs to the P(II) protein family.

Its function is as follows. Could be involved in the regulation of nitrogen fixation. This Methanothermococcus thermolithotrophicus (Methanococcus thermolithotrophicus) protein is Nitrogen fixation nifHD region GlnB-like protein 2 (glnBB).